The chain runs to 523 residues: MSNRVIIFDTTLRDGEQALAASLTVKEKLQIALALERLGVDVMEVGFPVSSPGDFESVQTIAKTIKNSRVCALSRALEKDIDAAAQALSVAEQFRIHTFISTSTIHVESKLKRSFDQVLEMAVGAVKYARRFTDDVEFSCEDAGRTPIDNLCRMVEEAIKAGARTINIPDTVGYTVPSEFGGIIQTLFNRVPNIDQAVISVHCHDDLGLSVANSITAVQHGARQIECTVNGIGERAGNCSLEEIAMILSTRKGELGLETGINAKEIHRTSSLVSQLCNMPVQANKAIVGANAFTHSSGIHQDGMLKAQNTYEIMTPESIGLNRNNLNMTSRSGRHVIKHRMSELGYGEQDYNMDVLYEEFLTLADKKGQVFDYDLEALAFMEAQAETDDHYKLQQLVVHSDSTEGSATATVKVAVNGETITEAATGNGPVDAAYKAVARASGCEINISSYQLSAKGEGQNALGQVDITAKYREQNFHGVGLATDVVEASAKALVHVMNLTWRADKVADCKQRIQQNKRELGGV.

Positions 5 to 267 (VIIFDTTLRD…ETGINAKEIH (263 aa)) constitute a Pyruvate carboxyltransferase domain. Mn(2+) contacts are provided by aspartate 14, histidine 202, histidine 204, and asparagine 238. The segment at 392-523 (KLQQLVVHSD…QQNKRELGGV (132 aa)) is regulatory domain.

This sequence belongs to the alpha-IPM synthase/homocitrate synthase family. LeuA type 1 subfamily. Homodimer. Requires Mn(2+) as cofactor.

The protein localises to the cytoplasm. The catalysed reaction is 3-methyl-2-oxobutanoate + acetyl-CoA + H2O = (2S)-2-isopropylmalate + CoA + H(+). It functions in the pathway amino-acid biosynthesis; L-leucine biosynthesis; L-leucine from 3-methyl-2-oxobutanoate: step 1/4. In terms of biological role, catalyzes the condensation of the acetyl group of acetyl-CoA with 3-methyl-2-oxobutanoate (2-ketoisovalerate) to form 3-carboxy-3-hydroxy-4-methylpentanoate (2-isopropylmalate). This chain is 2-isopropylmalate synthase, found in Shewanella pealeana (strain ATCC 700345 / ANG-SQ1).